Reading from the N-terminus, the 395-residue chain is MTKALYLDCHAGIAGDMLLSALVDLGAHPEDIESELKKLPLDQFKLHFQKRVKQGIHAMTLNIDVKESNHHRHVNDIFKMIDDSTLPERVKYRSKKIFEIIGQAEAKIHGMSFEEVHFHEVGAMDSIIDIIGGCIALEQLGINTLYCSAIPTGHGKIHIAHGIYPIPAPATAEILKGIPIAHFDVQSELTTPTGAAFAKGLVSSFGPFPSATIQHIGYGAGSKDFNFPNILRVIQFDSEFEQQDSVQVIECQIDDMTPEALGDFMNNALEQGALDAYYTPIFMKKSRPSTQLTLICKLHDKIYFEQLILQETSSLGVRSTSVNRKILNRAFKILSTQHGTVSIKFGLQNGKIMKMKPEYEDLKKMAKTTNQPFQVIHNEVLQQLYQTYRIGDILQ.

The protein belongs to the LarC family.

It catalyses the reaction Ni(II)-pyridinium-3,5-bisthiocarboxylate mononucleotide = pyridinium-3,5-bisthiocarboxylate mononucleotide + Ni(2+). In terms of biological role, involved in the biosynthesis of a nickel-pincer cofactor ((SCS)Ni(II) pincer complex). Binds Ni(2+), and functions in nickel delivery to pyridinium-3,5-bisthiocarboxylic acid mononucleotide (P2TMN), to form the mature cofactor. Is thus probably required for the activation of nickel-pincer cofactor-dependent enzymes. In Staphylococcus epidermidis (strain ATCC 35984 / DSM 28319 / BCRC 17069 / CCUG 31568 / BM 3577 / RP62A), this protein is Pyridinium-3,5-bisthiocarboxylic acid mononucleotide nickel insertion protein.